We begin with the raw amino-acid sequence, 519 residues long: Apolipoprotein N-acyltransferase (519 aa).

The next 6 helical transmembrane spans lie at 6–26, 47–67, 83–103, 126–146, 174–194, and 206–226; these read APLG…IWIF, LTAI…ITGV, IAAF…FVWL, LFIL…SHSI, LLSA…IDFL, and WHYF…GWLL. Positions 244–482 constitute a CN hydrolase domain; the sequence is IQGNIPNQIK…YEIHAAPIYR (239 aa). Glutamate 285 functions as the Proton acceptor in the catalytic mechanism. Residue lysine 343 is part of the active site. The active-site Nucleophile is cysteine 394. The helical transmembrane segment at 496-516 threads the bilayer; sequence VVFLLLVVSAIAWLYQIVFPL.

It belongs to the CN hydrolase family. Apolipoprotein N-acyltransferase subfamily.

Its subcellular location is the cell inner membrane. It catalyses the reaction N-terminal S-1,2-diacyl-sn-glyceryl-L-cysteinyl-[lipoprotein] + a glycerophospholipid = N-acyl-S-1,2-diacyl-sn-glyceryl-L-cysteinyl-[lipoprotein] + a 2-acyl-sn-glycero-3-phospholipid + H(+). It participates in protein modification; lipoprotein biosynthesis (N-acyl transfer). Functionally, catalyzes the phospholipid dependent N-acylation of the N-terminal cysteine of apolipoprotein, the last step in lipoprotein maturation. The polypeptide is Apolipoprotein N-acyltransferase (Synechocystis sp. (strain ATCC 27184 / PCC 6803 / Kazusa)).